Consider the following 88-residue polypeptide: Small ribosomal subunit protein bS20 (88 aa).

The interval 1 to 20 (MANTAQARKRARQAVVQNAH) is disordered.

It belongs to the bacterial ribosomal protein bS20 family.

Functionally, binds directly to 16S ribosomal RNA. The protein is Small ribosomal subunit protein bS20 of Ralstonia pickettii (strain 12J).